The sequence spans 103 residues: Omega toxin Ap5 (103 aa).

The first 22 residues, M1–A22, serve as a signal peptide directing secretion. A propeptide spanning residues D23–R57 is cleaved from the precursor. 3 disulfide bridges follow: C58-C73, C65-C78, and C72-C93.

The protein belongs to the neurotoxin 14 (magi-1) family. 08 (Ltx-4) subfamily. As to expression, expressed by the venom duct.

It localises to the secreted. In terms of biological role, shows a weak inhibition on the voltage-gated calcium channel Cav2.1/CACNA1A and some voltage-gated sodium channels (with 1 uM toxin tested: 22.08% inhibition on Cav2.1/CACNA1A, 6.6% on Nav1.1/SCN1A, 4.2% on Nav1.5, and 16% on Nav1.7). Its function is as follows. Shows a weak inhibition on the voltage-gated calcium channel Cav2.1/CACNA1A (28.06% at 1 uM). The polypeptide is Omega toxin Ap5 (Acanthoscurria paulensis (Brazilian giant black tarantula spider)).